The chain runs to 377 residues: MSSIQGTSGSSPERLPNSREDEGMNPEGVTPSGQTISFSAVGKSTSAEDIQQLALPIIQSDAMASSPSVGGAVGEVEVAEIIADVMEKNDANVQKLDEDMEALLQAISSSEEQLESPGVRNKSALKGTNRSNSHREEIARNQRLRSLSVRHGLAYNRHSLRRLARGIRHHAGLVTASFATLHKTLRAVPQEDLKSILGKDSDTVLARLHKLGLEVNEKGEWRLRANGEVGSINQSICNLARSAERLHDDGPLSINDQASEEEVTACCSAGRRACQFLQEHLMGALRAIYYQILRFFHWISRRVEVEPEDTDYYMRPGIFINPYASYLSSSPSVEDPRSLRDRLRDGGALSGEDTLFSMPQDESLDSESVSDDDRGFQ.

Composition is skewed to polar residues over residues 1–11 (MSSIQGTSGSS) and 31–43 (PSGQ…AVGK). Disordered regions lie at residues 1-43 (MSSI…AVGK), 109-141 (SSEE…IARN), and 328-377 (SSSP…RGFQ). Positions 334–345 (EDPRSLRDRLRD) are enriched in basic and acidic residues.

Belongs to the chlamydial CPn_0499/CT_392/TC_0671 family.

This is an uncharacterized protein from Chlamydia trachomatis serovar D (strain ATCC VR-885 / DSM 19411 / UW-3/Cx).